The following is a 363-amino-acid chain: Forkhead box protein I1 (363 aa).

Positions 1 to 18 (MNPVQQPAQQRSPASSLP) are enriched in low complexity. Disordered regions lie at residues 1 to 24 (MNPV…KRAQ), 210 to 269 (DNGN…SPPA), and 344 to 363 (TTAQ…QGRY). Positions 125–219 (RPPYSYSALI…DNGNFRRKRK (95 aa)) form a DNA-binding region, fork-head. The segment covering 231–243 (KIGEDHLNPKGKE) has biased composition (basic and acidic residues). Composition is skewed to low complexity over residues 244–258 (SPPM…EPSP) and 347–363 (QKQP…QGRY).

It is found in the nucleus. Transcription factor. Essential for ventral specification of the early cephalic (head) ectoderm during gastrulation, playing a role in the 'non-neural' versus 'neural' cell fate choice. Binds to DNA via the target sequence 5'-[AG]TAAA[CT]A-3', with 5'-ATAAACA-3' being the preferred binding site. This is Forkhead box protein I1 from Xenopus tropicalis (Western clawed frog).